The primary structure comprises 426 residues: UPF0329 protein ECU06_0040 (426 aa).

Positions 136–172 (RQRKREEETERSVKELVGDEEKAKSKEEKAKSKEEKA) are enriched in basic and acidic residues. A disordered region spans residues 136-230 (RQRKREEETE…GGKKKSKGGR (95 aa)). The span at 220–230 (KGGKKKSKGGR) shows a compositional bias: basic residues.

It belongs to the UPF0329 family.

This chain is UPF0329 protein ECU06_0040, found in Encephalitozoon cuniculi (strain GB-M1) (Microsporidian parasite).